The following is a 335-amino-acid chain: Urokinase plasminogen activator surface receptor (335 aa).

The N-terminal stretch at methionine 1–glycine 22 is a signal peptide. UPAR/Ly6 domains are found at residues leucine 23 to tyrosine 114, leucine 115 to glycine 213, and arginine 214 to glycine 305. Cystine bridges form between cysteine 25–cysteine 46, cysteine 28–cysteine 34, and cysteine 39–cysteine 67. An N-linked (GlcNAc...) asparagine glycan is attached at asparagine 74. Disulfide bonds link cysteine 93/cysteine 98, cysteine 117/cysteine 144, cysteine 120/cysteine 127, cysteine 137/cysteine 169, cysteine 175/cysteine 192, cysteine 193/cysteine 198, cysteine 216/cysteine 244, cysteine 219/cysteine 227, cysteine 237/cysteine 263, cysteine 269/cysteine 287, and cysteine 288/cysteine 293. Asparagine 124 carries an N-linked (GlcNAc...) asparagine glycan. Asparagine 184, asparagine 194, asparagine 222, and asparagine 255 each carry an N-linked (GlcNAc...) asparagine glycan. Glycine 305 is lipidated: GPI-anchor amidated glycine. A propeptide spans alanine 306–threonine 335 (removed in mature form).

Monomer. Interacts (via the UPAR/Ly6 domains) with SRPX2. Interacts with MRC2. Interacts with FAP (seprase); the interaction occurs at the cell surface of invadopodia membrane. Interacts with SORL1 (via N-terminal ectodomain); this interaction decreases PLAUR internalization. The ternary complex composed of PLAUR-PLAU-SERPINE1 also interacts with SORL1. Interacts with CD82; this interaction prevents PLAUR from binding to its high affinity ligand PLAU.

Its subcellular location is the cell membrane. The protein resides in the cell projection. It localises to the invadopodium membrane. Functionally, acts as a receptor for urokinase plasminogen activator. Plays a role in localizing and promoting plasmin formation. Mediates the proteolysis-independent signal transduction activation effects of U-PA. It is subject to negative-feedback regulation by U-PA which cleaves it into an inactive form. In Pan troglodytes (Chimpanzee), this protein is Urokinase plasminogen activator surface receptor (PLAUR).